We begin with the raw amino-acid sequence, 439 residues long: Tubulin beta chain (439 aa).

GTP-binding residues include Q11, E69, S138, G142, T143, G144, N204, and N226. Position 69 (E69) interacts with Mg(2+).

It belongs to the tubulin family. As to quaternary structure, dimer of alpha and beta chains. A typical microtubule is a hollow water-filled tube with an outer diameter of 25 nm and an inner diameter of 15 nM. Alpha-beta heterodimers associate head-to-tail to form protofilaments running lengthwise along the microtubule wall with the beta-tubulin subunit facing the microtubule plus end conferring a structural polarity. Microtubules usually have 13 protofilaments but different protofilament numbers can be found in some organisms and specialized cells. The cofactor is Mg(2+).

The protein localises to the cytoplasm. It localises to the cytoskeleton. Functionally, tubulin is the major constituent of microtubules, a cylinder consisting of laterally associated linear protofilaments composed of alpha- and beta-tubulin heterodimers. Microtubules grow by the addition of GTP-tubulin dimers to the microtubule end, where a stabilizing cap forms. Below the cap, tubulin dimers are in GDP-bound state, owing to GTPase activity of alpha-tubulin. This Encephalitozoon cuniculi (strain GB-M1) (Microsporidian parasite) protein is Tubulin beta chain (TUB2).